A 663-amino-acid polypeptide reads, in one-letter code: NAD(P)H-quinone oxidoreductase subunit 5, chloroplastic (663 aa).

16 helical membrane-spanning segments follow: residues 11-31, 41-61, 89-109, 126-146, 149-169, 189-209, 224-244, 260-280, 292-312, 329-349, 398-418, 436-456, 482-502, 528-548, 607-627, and 635-655; these read WLIP…LISF, LYGL…MNLL, FFID…AVLV, FFAY…SPNL, IYIF…FWFT, FCLL…DFIT, HLYF…AKSA, TPIS…FLVA, IMNL…TIAL, LGYM…FHLV, FTFL…CFWS, IAWI…LLAF, LYML…GFIS, ILLN…AYSI, WLFD…GQSL, and VSSY…FLPL.

Belongs to the complex I subunit 5 family. As to quaternary structure, NDH is composed of at least 16 different subunits, 5 of which are encoded in the nucleus.

It is found in the plastid. It localises to the chloroplast thylakoid membrane. It carries out the reaction a plastoquinone + NADH + (n+1) H(+)(in) = a plastoquinol + NAD(+) + n H(+)(out). The catalysed reaction is a plastoquinone + NADPH + (n+1) H(+)(in) = a plastoquinol + NADP(+) + n H(+)(out). Functionally, NDH shuttles electrons from NAD(P)H:plastoquinone, via FMN and iron-sulfur (Fe-S) centers, to quinones in the photosynthetic chain and possibly in a chloroplast respiratory chain. The immediate electron acceptor for the enzyme in this species is believed to be plastoquinone. Couples the redox reaction to proton translocation, and thus conserves the redox energy in a proton gradient. The sequence is that of NAD(P)H-quinone oxidoreductase subunit 5, chloroplastic (ndhF) from Chara vulgaris (Common stonewort).